Consider the following 89-residue polypeptide: UPF0367 protein CYA_1023 (89 aa).

Residues 69–89 (TKSGGPGAPGTRPGFLAQLQG) are disordered.

Belongs to the UPF0367 family.

This Synechococcus sp. (strain JA-3-3Ab) (Cyanobacteria bacterium Yellowstone A-Prime) protein is UPF0367 protein CYA_1023.